The sequence spans 241 residues: Uridylate kinase (241 aa).

12 to 15 (KLSG) lines the ATP pocket. The segment at 20–25 (GDKGVG) is involved in allosteric activation by GTP. Glycine 54 provides a ligand contact to UMP. 2 residues coordinate ATP: glycine 55 and arginine 59. UMP is bound by residues aspartate 74 and 135-142 (IGSPYFST). Residues asparagine 163, tyrosine 169, and aspartate 172 each contribute to the ATP site.

The protein belongs to the UMP kinase family. Homohexamer.

The protein localises to the cytoplasm. It carries out the reaction UMP + ATP = UDP + ADP. Its pathway is pyrimidine metabolism; CTP biosynthesis via de novo pathway; UDP from UMP (UMPK route): step 1/1. With respect to regulation, allosterically activated by GTP. Inhibited by UTP. Functionally, catalyzes the reversible phosphorylation of UMP to UDP. The polypeptide is Uridylate kinase (Streptococcus gordonii (strain Challis / ATCC 35105 / BCRC 15272 / CH1 / DL1 / V288)).